The primary structure comprises 632 residues: Chaperone protein HtpG (632 aa).

An a; substrate-binding region spans residues 1 to 343; sequence MSEQTINNKE…SNDLALNVSR (343 aa). The b stretch occupies residues 344–560; that stretch reads EILQDNKVTQ…DFEMGTQMAK (217 aa). Positions 561 to 632 are c; that stretch reads LLEAAGQAAP…LSAMNQLLSK (72 aa).

The protein belongs to the heat shock protein 90 family. As to quaternary structure, homodimer.

The protein localises to the cytoplasm. Functionally, molecular chaperone. Has ATPase activity. This chain is Chaperone protein HtpG, found in Aliivibrio salmonicida (strain LFI1238) (Vibrio salmonicida (strain LFI1238)).